A 469-amino-acid chain; its full sequence is MWKEKVQQYEDQIINDLKGLLAIESVRDDAKASEDAPVGPGPRKALDYMYEIAHRDGFTTHDVDHIAGRIEAGKGNDVLGILCHVDVVPAGDGWDSNPFEPVVTEDAIIARGTLDDKGPTIAAYYAIKILEDMNVDWKKRIHMIIGTDEESDWKCTDRYFKTEEMPTLGFAPDAEFPCIHGEKGITTFDLVQNKLAEDQDEPDYELITFKSGERYNMVPDHAEARVLVKENMTDVIQDFEYFLEQNHLQGDSTVDSGILVLTVEGKAVHGMDPSIGVNAGLYLLKFLASLNLDNNAKAFVAFSNRYLFNSDFGEKMGMKFHTDVMGDVTTNIGVITYDNENAGLFGINLRYPEGFEFEKAMDRFANEIQQYGFEVKLGKVQPPHYVDKNDPFVQKLVTAYRNQTNDMTEPYTIGGGTYARNLDKGVAFGAMFSDSEDLMHQKNEYITKKQLFNATSIYLEAIYSLCVEE.

Position 84 (His-84) interacts with Zn(2+). The active site involves Asp-86. Asp-115 serves as a coordination point for Zn(2+). The active-site Proton acceptor is the Glu-149. Zn(2+) contacts are provided by Glu-150, Asp-173, and His-440.

Belongs to the peptidase M20A family. Requires Zn(2+) as cofactor.

This Staphylococcus aureus (strain MRSA252) protein is Putative dipeptidase SAR1836.